Consider the following 542-residue polypeptide: Putative DEAD-box ATP-dependent RNA helicase 43 (542 aa).

Positions 97 to 125 (KNFMDMKFPSPLLRMLKDKGIMHPTPIQV) match the Q motif motif. Residues 128–312 (LPVVLSGRDM…TSALVKPVTV (185 aa)) enclose the Helicase ATP-binding domain. 141-148 (AFTGSGKT) contacts ATP. The DEAD box signature appears at 260-263 (DEAD). A Helicase C-terminal domain is found at 323-483 (DVIQEVEYVK…RIPPVLAELN (161 aa)). The CCHC-type zinc-finger motif lies at 499–516 (KGCAYCGGLGHRILQCPK).

The protein belongs to the DEAD box helicase family. DDX41 subfamily.

It catalyses the reaction ATP + H2O = ADP + phosphate + H(+). The protein is Putative DEAD-box ATP-dependent RNA helicase 43 (RH43) of Arabidopsis thaliana (Mouse-ear cress).